A 75-amino-acid chain; its full sequence is uncharacterized protein (75 aa).

This is an uncharacterized protein from Rickettsia conorii (strain ATCC VR-613 / Malish 7).